Consider the following 319-residue polypeptide: tRNA (guanine-N(7)-)-methyltransferase (319 aa).

Residues 1–44 are disordered; that stretch reads MSESPETPEPSPAQSPEAAPEQPQAARPVTPGSQASFGTYGGRP. Residues 14–26 are compositionally biased toward low complexity; it reads QSPEAAPEQPQAA. S-adenosyl-L-methionine is bound by residues glutamate 103, glutamate 128, asparagine 155, and aspartate 178. Residue aspartate 178 is part of the active site. Residues lysine 182 and aspartate 214 each coordinate substrate. A disordered region spans residues 262-288; sequence APVKEGRAPVSTEHTGPNEGVDETGGW. 298–301 is a substrate binding site; the sequence is TSFE.

Belongs to the class I-like SAM-binding methyltransferase superfamily. TrmB family.

It carries out the reaction guanosine(46) in tRNA + S-adenosyl-L-methionine = N(7)-methylguanosine(46) in tRNA + S-adenosyl-L-homocysteine. Its pathway is tRNA modification; N(7)-methylguanine-tRNA biosynthesis. Catalyzes the formation of N(7)-methylguanine at position 46 (m7G46) in tRNA. In Arthrobacter sp. (strain FB24), this protein is tRNA (guanine-N(7)-)-methyltransferase.